Reading from the N-terminus, the 354-residue chain is tRNA N6-adenosine threonylcarbamoyltransferase (354 aa).

2 residues coordinate Fe cation: His-115 and His-119. Residues 138–142, Asp-171, Gly-184, and Asn-285 each bind substrate; that span reads LVSGG. Position 313 (Asp-313) interacts with Fe cation.

Belongs to the KAE1 / TsaD family. Fe(2+) is required as a cofactor.

Its subcellular location is the cytoplasm. It catalyses the reaction L-threonylcarbamoyladenylate + adenosine(37) in tRNA = N(6)-L-threonylcarbamoyladenosine(37) in tRNA + AMP + H(+). Its function is as follows. Required for the formation of a threonylcarbamoyl group on adenosine at position 37 (t(6)A37) in tRNAs that read codons beginning with adenine. Is involved in the transfer of the threonylcarbamoyl moiety of threonylcarbamoyl-AMP (TC-AMP) to the N6 group of A37, together with TsaE and TsaB. TsaD likely plays a direct catalytic role in this reaction. This is tRNA N6-adenosine threonylcarbamoyltransferase from Albidiferax ferrireducens (strain ATCC BAA-621 / DSM 15236 / T118) (Rhodoferax ferrireducens).